A 192-amino-acid polypeptide reads, in one-letter code: uncharacterized protein (192 aa).

The Nudix hydrolase domain maps to 29–160; that stretch reads QRQAAVLIPV…PLDVYRRGNS (132 aa). The short motif at 67-89 is the Nudix box element; that stretch reads GAVDSTDASLIAAALREAQEEVA. Positions 83 and 87 each coordinate Mg(2+).

The protein belongs to the Nudix hydrolase family. PCD1 subfamily. Requires Mn(2+) as cofactor. Mg(2+) is required as a cofactor.

Functionally, probably mediates the hydrolysis of some nucleoside diphosphate derivatives. This is an uncharacterized protein from Salmonella choleraesuis (strain SC-B67).